A 165-amino-acid chain; its full sequence is MKAQGFVHKYGDNVDTDVIIPARYLNTADHKELANHCMEDIDKDFVAKVKEGDIMVGGWNFGCGSSREHAPIAIKASGISCIIAKSFARIFYRNAINIGLAIIESEEVAQSLENGDEVAIDFDKGIITNCKNNQQFSTTPFPPFIQEIINANGYLNWISKQKANA.

The protein belongs to the LeuD family. LeuD type 2 subfamily. As to quaternary structure, heterodimer of LeuC and LeuD.

It catalyses the reaction (2R,3S)-3-isopropylmalate = (2S)-2-isopropylmalate. The protein operates within amino-acid biosynthesis; L-leucine biosynthesis; L-leucine from 3-methyl-2-oxobutanoate: step 2/4. Its function is as follows. Catalyzes the isomerization between 2-isopropylmalate and 3-isopropylmalate, via the formation of 2-isopropylmaleate. The sequence is that of 3-isopropylmalate dehydratase small subunit from Helicobacter hepaticus (strain ATCC 51449 / 3B1).